The following is a 164-amino-acid chain: HTH-type transcriptional regulator IscR (164 aa).

In terms of domain architecture, HTH rrf2-type spans 2–131 (RLTSKGRYAV…NNITLAELVN (130 aa)). The segment at residues 28-51 (LADISERQGISLSYLEQLFSRLRK) is a DNA-binding region (H-T-H motif). Residues Cys92, Cys98, and Cys104 each coordinate [2Fe-2S] cluster. Positions 143–164 (NNDTRRTANGRPQETINVNLRA) are disordered. Residues 152–164 (GRPQETINVNLRA) show a composition bias toward polar residues.

[2Fe-2S] cluster is required as a cofactor.

Functionally, regulates the transcription of several operons and genes involved in the biogenesis of Fe-S clusters and Fe-S-containing proteins. The chain is HTH-type transcriptional regulator IscR from Yersinia enterocolitica serotype O:8 / biotype 1B (strain NCTC 13174 / 8081).